The chain runs to 97 residues: Conotoxin Cal6.1e (97 aa).

The N-terminal stretch at 1 to 22 (MKLTTVLIVAVLVLAACQFTVT) is a signal peptide. A disordered region spans residues 23–49 (DNSGDDTENPSLRSAGENQNPDSTKTI). The propeptide occupies 23–60 (DNSGDDTENPSLRSAGENQNPDSTKTITARATRARTNM). A compositionally biased stretch (polar residues) spans 31-45 (NPSLRSAGENQNPDS). Disulfide bonds link cysteine 71/cysteine 87, cysteine 78/cysteine 91, and cysteine 86/cysteine 96.

This sequence belongs to the conotoxin O1 superfamily. Expressed by the venom duct.

The protein resides in the secreted. Functionally, probable neurotoxin with unknown target. Possibly targets ion channels. This chain is Conotoxin Cal6.1e, found in Californiconus californicus (California cone).